Consider the following 214-residue polypeptide: Non-structural protein NP-1 (214 aa).

Disordered regions lie at residues 1 to 87 (MSSE…TNPY) and 192 to 214 (ESEE…NASN). The segment covering 33-43 (SRSRSPIRRHG) has biased composition (basic residues). Over residues 44–55 (EKNLEYAHHSNQ) the composition is skewed to basic and acidic residues. The segment covering 56–71 (ENRQSSYTALKTSDQA) has biased composition (polar residues). Positions 192–201 (ESEEVTDEEM) are enriched in acidic residues.

This sequence belongs to the Bocaparvovirus Non-structural protein NP-1 family.

The protein resides in the host nucleus. In terms of biological role, required for the expression of the capsid proteins. Performs the splicing and internal polyadenylation of the viral capsid-encoding mRNA precursor, which allows its maturation and expression. Transactivates the viral promoter. In Human bocavirus 2 (HBoV2), this protein is Non-structural protein NP-1 (NP1).